Consider the following 435-residue polypeptide: Serine--tRNA ligase (435 aa).

An L-serine-binding site is contributed by Thr239–Glu241. Position 270–272 (Arg270–Glu272) interacts with ATP. Glu293 contacts L-serine. Glu357–Ser360 is a binding site for ATP. Residue Ser393 coordinates L-serine.

The protein belongs to the class-II aminoacyl-tRNA synthetase family. Type-1 seryl-tRNA synthetase subfamily. In terms of assembly, homodimer. The tRNA molecule binds across the dimer.

Its subcellular location is the cytoplasm. The enzyme catalyses tRNA(Ser) + L-serine + ATP = L-seryl-tRNA(Ser) + AMP + diphosphate + H(+). It carries out the reaction tRNA(Sec) + L-serine + ATP = L-seryl-tRNA(Sec) + AMP + diphosphate + H(+). The protein operates within aminoacyl-tRNA biosynthesis; selenocysteinyl-tRNA(Sec) biosynthesis; L-seryl-tRNA(Sec) from L-serine and tRNA(Sec): step 1/1. In terms of biological role, catalyzes the attachment of serine to tRNA(Ser). Is also able to aminoacylate tRNA(Sec) with serine, to form the misacylated tRNA L-seryl-tRNA(Sec), which will be further converted into selenocysteinyl-tRNA(Sec). This Parvibaculum lavamentivorans (strain DS-1 / DSM 13023 / NCIMB 13966) protein is Serine--tRNA ligase.